We begin with the raw amino-acid sequence, 309 residues long: Porphobilinogen deaminase (309 aa).

Cys242 is modified (S-(dipyrrolylmethanemethyl)cysteine).

This sequence belongs to the HMBS family. As to quaternary structure, monomer. It depends on dipyrromethane as a cofactor.

The enzyme catalyses 4 porphobilinogen + H2O = hydroxymethylbilane + 4 NH4(+). The protein operates within porphyrin-containing compound metabolism; protoporphyrin-IX biosynthesis; coproporphyrinogen-III from 5-aminolevulinate: step 2/4. Functionally, tetrapolymerization of the monopyrrole PBG into the hydroxymethylbilane pre-uroporphyrinogen in several discrete steps. This Actinobacillus succinogenes (strain ATCC 55618 / DSM 22257 / CCUG 43843 / 130Z) protein is Porphobilinogen deaminase.